The primary structure comprises 168 residues: Protein-export protein SecB (168 aa).

Residues 1–10 (MSDQGTNNGE) are compositionally biased toward polar residues. The disordered stretch occupies residues 1–22 (MSDQGTNNGESGNGGAQNGEAP).

The protein belongs to the SecB family. Homotetramer, a dimer of dimers. One homotetramer interacts with 1 SecA dimer.

It is found in the cytoplasm. In terms of biological role, one of the proteins required for the normal export of preproteins out of the cell cytoplasm. It is a molecular chaperone that binds to a subset of precursor proteins, maintaining them in a translocation-competent state. It also specifically binds to its receptor SecA. The polypeptide is Protein-export protein SecB (Parvibaculum lavamentivorans (strain DS-1 / DSM 13023 / NCIMB 13966)).